We begin with the raw amino-acid sequence, 475 residues long: Early growth response protein 1-B (475 aa).

Disordered regions lie at residues 109–180 (NVSS…TASI) and 264–285 (PSRM…RPYA). Over residues 111-140 (SSSSAPSSSPSSSSSSSSSSSSQSPPLSCS) the composition is skewed to low complexity. Over residues 170–179 (QPFQNASTAS) the composition is skewed to polar residues. 3 consecutive C2H2-type zinc fingers follow at residues 284–308 (YACP…IRIH), 314–336 (FQCR…IRTH), and 342–364 (FACD…TKIH). The segment at 355 to 379 (DERKRHTKIHLRQKDKKADKATPVS) is disordered. The segment covering 359–369 (RHTKIHLRQKD) has biased composition (basic residues).

Belongs to the EGR C2H2-type zinc-finger protein family.

The protein localises to the nucleus. Its subcellular location is the cytoplasm. Transcriptional regulator. Recognizes and binds to the DNA sequence 5'-GCG(T/G)GGGCG-3'(EGR-site) in the promoter region of target genes. Binds double-stranded target DNA, irrespective of the cytosine methylation status. Regulates the transcription of numerous target genes, and thereby plays an important role in regulating the response to growth factors, DNA damage, and ischemia. Plays a role in the regulation of cell survival, proliferation and cell death. Mediates responses to ischemia and hypoxia; regulates the expression of proteins that are involved in inflammatory processes. Plays a role in regulating the expression of circadian clock genes. The polypeptide is Early growth response protein 1-B (egr1-b) (Xenopus laevis (African clawed frog)).